The sequence spans 239 residues: Cytochrome b6-f complex iron-sulfur subunit 1, cyanelle (239 aa).

A cyanelle-targeting transit peptide spans 1–60; the sequence is MAFTTTAVVAPRGAKITGQSSTCAIQNGKTVAVGTSKQVGSFKPVFAAAKPAKETTFSVS. Residues 81 to 101 form a helical membrane-spanning segment; the sequence is LLGAIAGPVAGAGGPFVSFLV. Positions 125-221 constitute a Rieske domain; that stretch reads VSSWLETHKP…VSVLEDGVVA (97 aa). Residues Cys-167, His-169, Cys-185, and His-188 each coordinate [2Fe-2S] cluster. Cysteines 172 and 187 form a disulfide.

It belongs to the Rieske iron-sulfur protein family. The 4 large subunits of the cytochrome b6-f complex are cytochrome b6, subunit IV (17 kDa polypeptide, petD), cytochrome f and the Rieske protein, while the 4 small subunits are petG, petL, petM and petN. The complex functions as a dimer. [2Fe-2S] cluster serves as cofactor.

Its subcellular location is the plastid. The protein localises to the cyanelle thylakoid membrane. It carries out the reaction 2 oxidized [plastocyanin] + a plastoquinol + 2 H(+)(in) = 2 reduced [plastocyanin] + a plastoquinone + 4 H(+)(out). In terms of biological role, component of the cytochrome b6-f complex, which mediates electron transfer between photosystem II (PSII) and photosystem I (PSI), cyclic electron flow around PSI, and state transitions. In Cyanophora paradoxa, this protein is Cytochrome b6-f complex iron-sulfur subunit 1, cyanelle (petC-1).